A 123-amino-acid polypeptide reads, in one-letter code: MPKSVMIVEDNELNMKLFRDLIEASGYETIRTRNGLEALDLAREHRPDLILMDIQLPEVSGLEVTKWLKDDDELRHIPVIAVTAFAMKGDEERIRQGGCEAYISKPISVPRFIETIKSYLGDA.

A Response regulatory domain is found at 4–120 (SVMIVEDNEL…RFIETIKSYL (117 aa)). A 4-aspartylphosphate modification is found at D53.

As to quaternary structure, interacts with DivL, PleC, DivJ and PdhS.

Its subcellular location is the cytoplasm. In terms of biological role, essential protein that is involved in the control of cell division, probably through the regulation of ctrA. Its phosphorylation status is regulated by PdhS. This chain is Polar-differentiation response regulator DivK (divK), found in Brucella anthropi (strain ATCC 49188 / DSM 6882 / CCUG 24695 / JCM 21032 / LMG 3331 / NBRC 15819 / NCTC 12168 / Alc 37) (Ochrobactrum anthropi).